A 440-amino-acid chain; its full sequence is Xaa-Pro dipeptidase (440 aa).

The Mn(2+) site is built by Asp244, Asp255, His335, Glu380, and Glu419.

This sequence belongs to the peptidase M24B family. Bacterial-type prolidase subfamily. Requires Mn(2+) as cofactor.

It catalyses the reaction Xaa-L-Pro dipeptide + H2O = an L-alpha-amino acid + L-proline. Its function is as follows. Splits dipeptides with a prolyl residue in the C-terminal position. In Shewanella loihica (strain ATCC BAA-1088 / PV-4), this protein is Xaa-Pro dipeptidase.